The chain runs to 1143 residues: cGMP-specific 3',5'-cyclic phosphodiesterase (1143 aa).

Low complexity-rich tracts occupy residues 1–19 (MHGPVSRSSSSSNMTDVSS) and 31–45 (TTSSSSAATTSASSS). A disordered region spans residues 1–167 (MHGPVSRSSS…KASTTASQQD (167 aa)). A compositionally biased stretch (polar residues) spans 46–59 (KPLTNGANKTTIST). Residues 75 to 84 (GAIPASSSSG) show a composition bias toward low complexity. Over residues 96-107 (SNNNRPAATNRS) the composition is skewed to polar residues. Over residues 131–153 (SSSSPSQSPSQTQASIQTQTSQQ) the composition is skewed to low complexity. GAF domains are found at residues 272-424 (DIDV…GIGI) and 456-637 (NLEC…GLGI). The PDEase domain maps to 667-990 (SQDQTEKLTQ…RNWQDLAEKV (324 aa)). The Proton donor role is filled by histidine 743. Residues histidine 747, histidine 783, aspartate 784, and aspartate 894 each coordinate a divalent metal cation. 2 disordered regions span residues 1031 to 1060 (QQSQHGSEDSHTPEHQRSGSRLSMKKTGAL) and 1090 to 1143 (SHVS…CALL). Composition is skewed to basic and acidic residues over residues 1036–1047 (GSEDSHTPEHQR) and 1090–1100 (SHVSEDMDDKS). Residues 1109–1127 (ASGSMGRMSASSSTSSTGG) are compositionally biased toward low complexity. The span at 1133–1143 (SKKRSKLCALL) shows a compositional bias: basic residues. At cysteine 1140 the chain carries Cysteine methyl ester. The S-farnesyl cysteine moiety is linked to residue cysteine 1140. Positions 1141-1143 (ALL) are cleaved as a propeptide — removed in mature form.

This sequence belongs to the cyclic nucleotide phosphodiesterase family. As to quaternary structure, interacts with PrBP. Requires a divalent metal cation as cofactor.

The protein resides in the cell membrane. The catalysed reaction is 3',5'-cyclic GMP + H2O = GMP + H(+). In terms of biological role, has a role regulating cGMP transport in Malpighian tubule principal cells. This is cGMP-specific 3',5'-cyclic phosphodiesterase from Drosophila simulans (Fruit fly).